A 363-amino-acid polypeptide reads, in one-letter code: MTVSYGAPGRVNLIGEHTDYNLGFALPIALPRRTVVTFTPEHTGAITARSDRADGSARIPLDTTPGQVTGWAAYAAGAIWALRGAGHPVPGGAMSITSDVEIGSGLSSSAALIGAVLGAVGAATGTRIDRLERARLAQRAENDYVGAPTGLLDHLAALFGAPKTALLIDFRDITVRPVAFDPDACDVVLLLMDSRARHRHAGGEYALRRASCERAAADLGVSSLRAVQDRGLAALGAIADPIDARRARHVLTENQRVLDFAAALADSDFTAAGQLLTASHESMREDFAITTERIDLIAESAVRAGALGARMTGGGFGGAVIALVPADRARDVADTVRRAAVTAGYDEPAVSRTYAAPGAAECC.

Residue 16 to 19 participates in substrate binding; that stretch reads EHTD. ATP contacts are provided by residues Ser50 and 103 to 109; that span reads GSGLSSS. Residues Ser109 and Glu141 each contribute to the Mg(2+) site. The active-site Proton acceptor is the Asp153. Tyr205 is a substrate binding site.

It belongs to the GHMP kinase family. GalK subfamily.

The protein resides in the cytoplasm. It catalyses the reaction alpha-D-galactose + ATP = alpha-D-galactose 1-phosphate + ADP + H(+). The protein operates within carbohydrate metabolism; galactose metabolism. In terms of biological role, catalyzes the transfer of the gamma-phosphate of ATP to D-galactose to form alpha-D-galactose-1-phosphate (Gal-1-P). This chain is Galactokinase, found in Mycobacterium bovis (strain ATCC BAA-935 / AF2122/97).